Reading from the N-terminus, the 107-residue chain is Phosphoribosyl-ATP pyrophosphatase (107 aa).

Belongs to the PRA-PH family.

Its subcellular location is the cytoplasm. The catalysed reaction is 1-(5-phospho-beta-D-ribosyl)-ATP + H2O = 1-(5-phospho-beta-D-ribosyl)-5'-AMP + diphosphate + H(+). It participates in amino-acid biosynthesis; L-histidine biosynthesis; L-histidine from 5-phospho-alpha-D-ribose 1-diphosphate: step 2/9. This is Phosphoribosyl-ATP pyrophosphatase from Neisseria gonorrhoeae (strain ATCC 700825 / FA 1090).